The following is a 151-amino-acid chain: Ribosome maturation factor RimP (151 aa).

The protein belongs to the RimP family.

Its subcellular location is the cytoplasm. Functionally, required for maturation of 30S ribosomal subunits. This is Ribosome maturation factor RimP from Pseudoalteromonas translucida (strain TAC 125).